The chain runs to 432 residues: MSVLIETTVGDLVIDLFVKEAPKTCENFLKLCKLKYYNFCPFYNIQHNYTCQTGDPLGPTGDGGRCVWNVLNKGTRFFKAEFNPSLVHNKMGLVSMSTATISSRDDKLLVCGSQFIITLSDNLEGLDERYPIYGQVAEGFDTLLKINDAICDEEGQPYRDIRIKHTIILDDPFEDPPDLVEPLRSPSPTPEQLATVRIGENEQIESETSEDKLQREKEMEAEAEAVTLEMIGDLPFAHVAPPENVLFVCKLNPVTQDEDLELIFSRFGKIISCQVIRDKETGDSLQYAFIEFDNKESVEKAYFKMQNVLIDDSRIHVDFSQSVARYRQYYNSNRDRKRSSSRSDDREYHRRSDGRYDRSNYRDDYRHRRKERDHRDDQSSFRNERFSNYYGDDRSYHKRRNTGNKNCDDHLRDKSPERRYRYDRRYRDDRYR.

In terms of domain architecture, PPIase cyclophilin-type spans 1–168 (MSVLIETTVG…RDIRIKHTII (168 aa)). At Ser206 the chain carries Phosphoserine. Positions 244–322 (NVLFVCKLNP…SRIHVDFSQS (79 aa)) constitute an RRM domain. The interval 330 to 432 (YNSNRDRKRS…DRRYRDDRYR (103 aa)) is disordered. 3 stretches are compositionally biased toward basic and acidic residues: residues 341 to 366 (SRSD…DDYR), 373 to 395 (DHRD…DDRS), and 406 to 432 (NCDD…DRYR).

Belongs to the cyclophilin-type PPIase family. PPIL4 subfamily.

Its subcellular location is the nucleus. It carries out the reaction [protein]-peptidylproline (omega=180) = [protein]-peptidylproline (omega=0). In terms of biological role, PPIases accelerate the folding of proteins. It catalyzes the cis-trans isomerization of proline imidic peptide bonds in oligopeptides. This Schizosaccharomyces pombe (strain 972 / ATCC 24843) (Fission yeast) protein is Peptidyl-prolyl cis-trans isomerase cyp6 (cyp6).